Consider the following 153-residue polypeptide: Ribonuclease H (153 aa).

In terms of domain architecture, RNase H type-1 spans 1 to 142 (MLKTIKIFSD…CDHLARESAK (142 aa)). Aspartate 10, glutamate 48, aspartate 70, and aspartate 134 together coordinate Mg(2+).

The protein belongs to the RNase H family. As to quaternary structure, monomer. Requires Mg(2+) as cofactor.

The protein resides in the cytoplasm. It catalyses the reaction Endonucleolytic cleavage to 5'-phosphomonoester.. Its function is as follows. Endonuclease that specifically degrades the RNA of RNA-DNA hybrids. The protein is Ribonuclease H of Buchnera aphidicola subsp. Baizongia pistaciae (strain Bp).